The following is a 309-amino-acid chain: Ornithine carbamoyltransferase (309 aa).

Carbamoyl phosphate contacts are provided by residues 52-55, Gln79, Arg103, and 130-133; these read STRT and HPCQ. Residues Asn161, Asp221, and 225–226 each bind L-ornithine; that span reads SM. Residues 261 to 262 and Arg289 contribute to the carbamoyl phosphate site; that span reads CL.

Belongs to the aspartate/ornithine carbamoyltransferase superfamily. OTCase family.

The protein resides in the cytoplasm. It carries out the reaction carbamoyl phosphate + L-ornithine = L-citrulline + phosphate + H(+). Its pathway is amino-acid biosynthesis; L-arginine biosynthesis; L-arginine from L-ornithine and carbamoyl phosphate: step 1/3. Functionally, reversibly catalyzes the transfer of the carbamoyl group from carbamoyl phosphate (CP) to the N(epsilon) atom of ornithine (ORN) to produce L-citrulline. The chain is Ornithine carbamoyltransferase from Methanoculleus marisnigri (strain ATCC 35101 / DSM 1498 / JR1).